Reading from the N-terminus, the 400-residue chain is Argininosuccinate synthase (400 aa).

ATP is bound by residues 10–18 (AYSGGVDTS) and alanine 38. Tyrosine 89 contributes to the L-citrulline binding site. An ATP-binding site is contributed by glycine 119. Residues threonine 121, asparagine 125, and aspartate 126 each coordinate L-aspartate. Asparagine 125 provides a ligand contact to L-citrulline. 5 residues coordinate L-citrulline: arginine 129, serine 177, serine 186, glutamate 262, and tyrosine 274.

This sequence belongs to the argininosuccinate synthase family. Type 1 subfamily. In terms of assembly, homotetramer.

It is found in the cytoplasm. The enzyme catalyses L-citrulline + L-aspartate + ATP = 2-(N(omega)-L-arginino)succinate + AMP + diphosphate + H(+). Its pathway is amino-acid biosynthesis; L-arginine biosynthesis; L-arginine from L-ornithine and carbamoyl phosphate: step 2/3. This Trichormus variabilis (strain ATCC 29413 / PCC 7937) (Anabaena variabilis) protein is Argininosuccinate synthase.